We begin with the raw amino-acid sequence, 776 residues long: Probable E3 ubiquitin-protein ligase HECTD2 (776 aa).

Residues 1–46 (MSEAVRVPSPATPLVVAAPAPEERKGKESEREKLPPIVSAGAGATA) form a disordered region. A compositionally biased stretch (low complexity) spans 7-20 (VPSPATPLVVAAPA). S9 bears the Phosphoserine mark. Residues 21-34 (PEERKGKESEREKL) show a composition bias toward basic and acidic residues. The region spanning 437 to 776 (KRADLKKKLK…ISNSEGFGLE (340 aa)) is the HECT domain. C744 (glycyl thioester intermediate) is an active-site residue.

It carries out the reaction S-ubiquitinyl-[E2 ubiquitin-conjugating enzyme]-L-cysteine + [acceptor protein]-L-lysine = [E2 ubiquitin-conjugating enzyme]-L-cysteine + N(6)-ubiquitinyl-[acceptor protein]-L-lysine.. It functions in the pathway protein modification; protein ubiquitination. In terms of biological role, E3 ubiquitin-protein ligase which accepts ubiquitin from an E2 ubiquitin-conjugating enzyme in the form of a thioester and then directly transfers the ubiquitin to targeted substrates. Functionally, (Microbial infection) Catalyzes ubiquitination of Botulinum neurotoxin A light chain (LC) of C.botulinum neurotoxin type A (BoNT/A). The polypeptide is Probable E3 ubiquitin-protein ligase HECTD2 (Homo sapiens (Human)).